A 372-amino-acid polypeptide reads, in one-letter code: THAP domain-containing protein 5 (372 aa).

The segment at 1-85 adopts a THAP-type zinc-finger fold; sequence MTRYCAATRC…LKPNAIPTLF (85 aa). Residues 306 to 362 are a coiled coil; it reads TDRHYLRQKIAKLQSKIAVLEAQENATLSRLRLLESVIAKLKQENLLSDEKLKILEN.

Its subcellular location is the nucleus. In Xenopus laevis (African clawed frog), this protein is THAP domain-containing protein 5 (thap5).